A 419-amino-acid polypeptide reads, in one-letter code: Tryptophan synthase beta chain (419 aa).

At K86 the chain carries N6-(pyridoxal phosphate)lysine. Basic and acidic residues predominate over residues 394-403 (VEQQKVEQQK). A disordered region spans residues 394–419 (VEQQKVEQQKADNQNTEKNNQESGNE). Over residues 404 to 419 (ADNQNTEKNNQESGNE) the composition is skewed to polar residues.

This sequence belongs to the TrpB family. In terms of assembly, tetramer of two alpha and two beta chains. Requires pyridoxal 5'-phosphate as cofactor.

The enzyme catalyses (1S,2R)-1-C-(indol-3-yl)glycerol 3-phosphate + L-serine = D-glyceraldehyde 3-phosphate + L-tryptophan + H2O. Its pathway is amino-acid biosynthesis; L-tryptophan biosynthesis; L-tryptophan from chorismate: step 5/5. Its function is as follows. The beta subunit is responsible for the synthesis of L-tryptophan from indole and L-serine. This is Tryptophan synthase beta chain from Shewanella halifaxensis (strain HAW-EB4).